The chain runs to 459 residues: Antizyme inhibitor 2 (459 aa).

The tract at residues 117 to 140 (QVAQIKYAAKHGVRLLSFDNEVEL) is necessary for polyamine uptake stimulation.

It belongs to the Orn/Lys/Arg decarboxylase class-II family. ODC antizyme inhibitor subfamily. Monomer. Interacts with OAZ1, OAZ2 and OAZ3; this interaction disrupts the interaction between the antizyme and ODC1. Does not form a heterodimer with ODC1. In terms of processing, ubiquitinated, leading to its proteasomal degradation; a process that is reduced in presence of antizymes. May also be degraded through the lysosomal degradative pathway in a proteasomal-independent manner. As to expression, expressed in the medulla and chromaffin cells of the adrenal gland. Expressed in the Langerhans islets of the pancreas. Expressed in the inner part of the seminiferous tubules and in spermatozoa located in the lumen of the epididymis of the testis. Expressed in the cortex, hippocampus and cerebellum of the brain. Expressed in normal and neoplastic mast cells (MC) (at protein level). Expressed in testis, pancreas and brain. Expressed throughout the differentiation process from spermatids to spermatozoa in the inner part of the seminiferous tubules. Expressed in the kidney: expressed in the superficial (Cs) and the deep layer (Cd) of the cortex region and in the outer stripe (OS), inner stripe (IS) and the inner medulla papilla (IM) of the medulla region.

It is found in the nucleus. It localises to the cytoplasm. The protein localises to the perinuclear region. The protein resides in the membrane. Its subcellular location is the cytoplasmic vesicle. It is found in the endoplasmic reticulum-Golgi intermediate compartment. It localises to the golgi apparatus. The protein localises to the cis-Golgi network. The protein resides in the trans-Golgi network. Its subcellular location is the cytoplasmic granule. It is found in the cell projection. It localises to the axon. The protein localises to the dendrite. The protein resides in the perikaryon. Functionally, antizyme inhibitor (AZI) protein that positively regulates ornithine decarboxylase (ODC) activity and polyamine uptake. AZI is an enzymatically inactive ODC homolog that counteracts the negative effect of ODC antizymes (AZs) OAZ1, OAZ2 and OAZ3 on ODC activity by competing with ODC for antizyme-binding. Inhibits antizyme-dependent ODC degradation and releases ODC monomers from their inactive complex with antizymes, leading to formation of the catalytically active ODC homodimer and restoring polyamine production. Participates in the morphological integrity of the trans-Golgi network (TGN) and functions as a regulator of intracellular secretory vesicle trafficking. This Mus musculus (Mouse) protein is Antizyme inhibitor 2 (Azin2).